The chain runs to 147 residues: Small ribosomal subunit protein bS18 (147 aa).

It belongs to the bacterial ribosomal protein bS18 family. In terms of assembly, part of the 30S ribosomal subunit. Forms a tight heterodimer with protein bS6.

Its function is as follows. Binds as a heterodimer with protein bS6 to the central domain of the 16S rRNA, where it helps stabilize the platform of the 30S subunit. The sequence is that of Small ribosomal subunit protein bS18 from Dehalococcoides mccartyi (strain ATCC BAA-2100 / JCM 16839 / KCTC 5957 / BAV1).